The chain runs to 224 residues: LexA repressor (224 aa).

A DNA-binding region (H-T-H motif) is located at residues R31–Q51. Active-site for autocatalytic cleavage activity residues include S142 and K179.

It belongs to the peptidase S24 family. As to quaternary structure, homodimer.

The catalysed reaction is Hydrolysis of Ala-|-Gly bond in repressor LexA.. Represses a number of genes involved in the response to DNA damage (SOS response), including recA and lexA. In the presence of single-stranded DNA, RecA interacts with LexA causing an autocatalytic cleavage which disrupts the DNA-binding part of LexA, leading to derepression of the SOS regulon and eventually DNA repair. The polypeptide is LexA repressor (Verminephrobacter eiseniae (strain EF01-2)).